Reading from the N-terminus, the 262-residue chain is Protein crossbronx-like (262 aa).

The UBC core domain maps to 15–179 (RQGYQVLAEY…VQELALFTKK (165 aa)).

This sequence belongs to the ubiquitin-conjugating enzyme family. FTS subfamily.

This is Protein crossbronx-like from Drosophila pseudoobscura pseudoobscura (Fruit fly).